Reading from the N-terminus, the 354-residue chain is S-adenosylmethionine:tRNA ribosyltransferase-isomerase (354 aa).

It belongs to the QueA family. As to quaternary structure, monomer.

The protein localises to the cytoplasm. It carries out the reaction 7-aminomethyl-7-carbaguanosine(34) in tRNA + S-adenosyl-L-methionine = epoxyqueuosine(34) in tRNA + adenine + L-methionine + 2 H(+). It participates in tRNA modification; tRNA-queuosine biosynthesis. In terms of biological role, transfers and isomerizes the ribose moiety from AdoMet to the 7-aminomethyl group of 7-deazaguanine (preQ1-tRNA) to give epoxyqueuosine (oQ-tRNA). The chain is S-adenosylmethionine:tRNA ribosyltransferase-isomerase from Salmonella paratyphi A (strain ATCC 9150 / SARB42).